The sequence spans 138 residues: ATP synthase epsilon chain (138 aa).

The protein belongs to the ATPase epsilon chain family. In terms of assembly, F-type ATPases have 2 components, CF(1) - the catalytic core - and CF(0) - the membrane proton channel. CF(1) has five subunits: alpha(3), beta(3), gamma(1), delta(1), epsilon(1). CF(0) has three main subunits: a, b and c.

The protein localises to the cell inner membrane. Functionally, produces ATP from ADP in the presence of a proton gradient across the membrane. The sequence is that of ATP synthase epsilon chain from Polynucleobacter necessarius subsp. necessarius (strain STIR1).